A 476-amino-acid chain; its full sequence is Aspartyl/glutamyl-tRNA(Asn/Gln) amidotransferase subunit B (476 aa).

Belongs to the GatB/GatE family. GatB subfamily. As to quaternary structure, heterotrimer of A, B and C subunits.

It carries out the reaction L-glutamyl-tRNA(Gln) + L-glutamine + ATP + H2O = L-glutaminyl-tRNA(Gln) + L-glutamate + ADP + phosphate + H(+). The catalysed reaction is L-aspartyl-tRNA(Asn) + L-glutamine + ATP + H2O = L-asparaginyl-tRNA(Asn) + L-glutamate + ADP + phosphate + 2 H(+). Functionally, allows the formation of correctly charged Asn-tRNA(Asn) or Gln-tRNA(Gln) through the transamidation of misacylated Asp-tRNA(Asn) or Glu-tRNA(Gln) in organisms which lack either or both of asparaginyl-tRNA or glutaminyl-tRNA synthetases. The reaction takes place in the presence of glutamine and ATP through an activated phospho-Asp-tRNA(Asn) or phospho-Glu-tRNA(Gln). The sequence is that of Aspartyl/glutamyl-tRNA(Asn/Gln) amidotransferase subunit B from Geobacillus thermodenitrificans (strain NG80-2).